The following is a 158-amino-acid chain: Cyclic pyranopterin monophosphate synthase (158 aa).

Substrate is bound by residues 75-77 (LCH) and 113-114 (ME). The active site involves D128.

The protein belongs to the MoaC family. As to quaternary structure, homohexamer; trimer of dimers.

The catalysed reaction is (8S)-3',8-cyclo-7,8-dihydroguanosine 5'-triphosphate = cyclic pyranopterin phosphate + diphosphate. It functions in the pathway cofactor biosynthesis; molybdopterin biosynthesis. Its function is as follows. Catalyzes the conversion of (8S)-3',8-cyclo-7,8-dihydroguanosine 5'-triphosphate to cyclic pyranopterin monophosphate (cPMP). This Dinoroseobacter shibae (strain DSM 16493 / NCIMB 14021 / DFL 12) protein is Cyclic pyranopterin monophosphate synthase.